Reading from the N-terminus, the 513-residue chain is ATP synthase subunit alpha (513 aa).

169 to 176 (GDRQIGKT) contributes to the ATP binding site.

It belongs to the ATPase alpha/beta chains family. As to quaternary structure, F-type ATPases have 2 components, CF(1) - the catalytic core - and CF(0) - the membrane proton channel. CF(1) has five subunits: alpha(3), beta(3), gamma(1), delta(1), epsilon(1). CF(0) has three main subunits: a(1), b(2) and c(9-12). The alpha and beta chains form an alternating ring which encloses part of the gamma chain. CF(1) is attached to CF(0) by a central stalk formed by the gamma and epsilon chains, while a peripheral stalk is formed by the delta and b chains.

Its subcellular location is the cell inner membrane. It catalyses the reaction ATP + H2O + 4 H(+)(in) = ADP + phosphate + 5 H(+)(out). Its function is as follows. Produces ATP from ADP in the presence of a proton gradient across the membrane. The alpha chain is a regulatory subunit. The polypeptide is ATP synthase subunit alpha (Vibrio alginolyticus).